The primary structure comprises 230 residues: Large ribosomal subunit protein uL1 (230 aa).

This sequence belongs to the universal ribosomal protein uL1 family. Part of the 50S ribosomal subunit.

Binds directly to 23S rRNA. The L1 stalk is quite mobile in the ribosome, and is involved in E site tRNA release. In terms of biological role, protein L1 is also a translational repressor protein, it controls the translation of the L11 operon by binding to its mRNA. The sequence is that of Large ribosomal subunit protein uL1 from Nitrobacter winogradskyi (strain ATCC 25391 / DSM 10237 / CIP 104748 / NCIMB 11846 / Nb-255).